Consider the following 276-residue polypeptide: MQHPAEHSPLGKTSEYVSSYTPSLLFPISRTAKWAELGLSAETLPYRGVDIWNCYELSWLTPAGKPVVAIGEFSIPADSPNIIESKSFKLYLNSLNQSAFDSREALRAVLQKDLSAAAGAPVGVRLRSLDEVAEEGIGRLPGRCIDELDIAVDGYEQPRPELLRCDAGRIVEEQLYSHLLKSNCPVTGQPDWGTLVVDYRGPALDPASLLAYLVSFRQHQDFHEQCVERIFLDLQRLLQPQALSVYARYVRRGGLDINPYRSLAEVAPDNRRLVRQ.

83 to 85 (IES) contacts substrate. 85–86 (SK) lines the NADPH pocket. Cys184 serves as the catalytic Thioimide intermediate. Residue Asp191 is the Proton donor of the active site. 223–224 (HE) lines the substrate pocket. 252-253 (RG) contributes to the NADPH binding site.

The protein belongs to the GTP cyclohydrolase I family. QueF type 2 subfamily. Homodimer.

The protein localises to the cytoplasm. The catalysed reaction is 7-aminomethyl-7-carbaguanine + 2 NADP(+) = 7-cyano-7-deazaguanine + 2 NADPH + 3 H(+). It participates in tRNA modification; tRNA-queuosine biosynthesis. Its function is as follows. Catalyzes the NADPH-dependent reduction of 7-cyano-7-deazaguanine (preQ0) to 7-aminomethyl-7-deazaguanine (preQ1). The chain is NADPH-dependent 7-cyano-7-deazaguanine reductase from Pseudomonas aeruginosa (strain LESB58).